Consider the following 598-residue polypeptide: MKRTTYAGLINEDYLGQTVTLQGWVQKRRDLGSLIFIDLRDREGIVQLVFSQEFSADALAVADQLRGEYVIEVQGTVVNRNADAVNDRMKTGKVEVEIHDAKILNKAKTPPFYIQDDINVSDELRLKYRYLDLRRPEMQRGLKIRNGITQAVHSYFDANGFYDIETPFLTKSTPEGARDYLVPSRVYQGHFYALPQSPQLFKQLLMGAGFDRYYQIARCFRDEDLRGDRQPEFTQIDMETSFLTAEEIQSYTEGLIKQVMKDVKGVDIKTPFTRMTWQEAMDRFGSEKPDVRFGMELKDMGVAVSNAGFKVFDNALANGGLVKAIAVPGGADQYSRKQIDAYTEYVKRFGAKGLAWMKVTDDGFSGPVAKFFKNDGDFEAITSAAAAKPGDLLLFAADSFKVVSDTLGYLRTAIAKELDLIDQDQYAYLWVVDWPLFEYDEGIERWVPAHHPFTMPNEEDVHYLNDGEDPHKAHAQSYDIILNGYELGGGSIRIHTRELQEKMFKALDFTKERAQEQFGFLLDALDMGFPPHGGLAIGLDRFAMLLSGNDNIREVIAFPKNSKASEPMTNAPSRVSDQQLADLDLNITNPVTDDEPTE.

E175 is a binding site for L-aspartate. Residues 199–202 (QLFK) form an aspartate region. R221 contacts L-aspartate. Residues 221-223 (RDE) and Q230 contribute to the ATP site. H450 contacts L-aspartate. E486 provides a ligand contact to ATP. Residue R493 coordinates L-aspartate. 538 to 541 (GLDR) is a binding site for ATP.

Belongs to the class-II aminoacyl-tRNA synthetase family. Type 1 subfamily. In terms of assembly, homodimer.

The protein localises to the cytoplasm. It catalyses the reaction tRNA(Asp) + L-aspartate + ATP = L-aspartyl-tRNA(Asp) + AMP + diphosphate. Catalyzes the attachment of L-aspartate to tRNA(Asp) in a two-step reaction: L-aspartate is first activated by ATP to form Asp-AMP and then transferred to the acceptor end of tRNA(Asp). This is Aspartate--tRNA ligase from Lactiplantibacillus plantarum (strain ATCC BAA-793 / NCIMB 8826 / WCFS1) (Lactobacillus plantarum).